We begin with the raw amino-acid sequence, 922 residues long: GPI inositol-deacylase (922 aa).

Topologically, residues 1–11 are cytoplasmic; it reads MFLHSVNLWNL. The chain crosses the membrane as a helical span at residues 12–32; the sequence is AFYVFMVFLATLGLWDVFFGF. At 33–597 the chain is on the lumenal side; that stretch reads EENKCSMSYM…GQVVRFHGGA (565 aa). Residue Ser-174 is part of the active site. 3 N-linked (GlcNAc...) asparagine glycosylation sites follow: Asn-363, Asn-402, and Asn-558. Residues 598 to 618 traverse the membrane as a helical segment; it reads LPAYVVSSILLAYGGQLYSLL. Over 619 to 641 the chain is Cytoplasmic; that stretch reads STGFCLEYGTMLDKEAKPYKVDP. Residues 642-662 form a helical membrane-spanning segment; sequence FVIMIKFLLGYKWFKELWDAV. Residues 663–668 are Lumenal-facing; it reads LLPELD. Residues 669–689 traverse the membrane as a helical segment; that stretch reads AIVLTSQSMCFPLVSLILFLF. The Cytoplasmic segment spans residues 690 to 694; that stretch reads GTCTA. Residues 695–715 form a helical membrane-spanning segment; it reads YWSGLLSSASVQLLSSLWLAL. Topologically, residues 716–733 are lumenal; it reads KRPAELPKDVKVMSPDLP. Residues 734–754 traverse the membrane as a helical segment; that stretch reads VLTVVFLIISWTTCGALAILL. Residues 755–816 lie on the Cytoplasmic side of the membrane; that stretch reads SYLYYVFKVV…NDAEDSLRMH (62 aa). The interval 776–801 is disordered; the sequence is NQPVNPKHSRRSEKKSNHHKDSAIQN. The span at 782–793 shows a compositional bias: basic residues; the sequence is KHSRRSEKKSNH. A helical membrane pass occupies residues 817 to 837; it reads STVINLLTWVVLLSMPSLIYW. The Lumenal segment spans residues 838–853; sequence SKNLRYYFKLNPDPCK. A helical transmembrane segment spans residues 854–874; sequence PLAFLLIPAIAVLGNTHTVSI. Topologically, residues 875–894 are cytoplasmic; the sequence is KSSKLLKTASQFPLPLAVGV. Residues 895 to 915 traverse the membrane as a helical segment; sequence IAFGSSHLYRVPCFVIIPLVF. The Lumenal portion of the chain corresponds to 916–922; that stretch reads HSLCNFM.

It belongs to the GPI inositol-deacylase family.

Its subcellular location is the endoplasmic reticulum membrane. Its function is as follows. GPI inositol-deacylase that catalyzes the remove of the acyl chain linked to the 2-OH position of inositol ring from the GPI-anchored protein (GPI-AP) in the endoplasmic reticulum. Initiates the post-attachment remodeling phase of GPI-AP biogenesis and participates in endoplasmic reticulum (ER)-to-Golgi transport of GPI-anchored protein. The chain is GPI inositol-deacylase from Rattus norvegicus (Rat).